Consider the following 294-residue polypeptide: Arsenical-resistance protein ARR1 (294 aa).

The segment covering 1–11 (MAKPRGRKGGR) has biased composition (basic residues). Positions 1 to 29 (MAKPRGRKGGRKPSLTPPKNKRAAQLRAS) are disordered. A basic motif region spans residues 22–45 (RAAQLRASQNAFRKRKLERLEELE). A bZIP domain is found at 22–72 (RAAQLRASQNAFRKRKLERLEELEKKEAQLTVTNDQIHILKKENELLHFML). A leucine-zipper region spans residues 44-72 (LEKKEAQLTVTNDQIHILKKENELLHFML). Arsenite contacts are provided by cysteine 132, cysteine 137, and cysteine 274.

This sequence belongs to the bZIP family. YAP subfamily. In terms of assembly, homodimer. In terms of processing, phosphorylation by HOG1 promotes nuclear localization in the presence of arsenic.

The protein localises to the cytoplasm. It localises to the nucleus. With respect to regulation, transcriptional activity is controlled by regulated degradation by the ubiquitin-proteasome pathway in absence of arsenic. Arsenic-exposure results in stabilization and increased transcriptional activity. Functionally, transcription activator required for resistance to arsenic compounds and for a regulated expression of ACR2, ACR3 and YCF1. This Saccharomyces cerevisiae (strain ATCC 204508 / S288c) (Baker's yeast) protein is Arsenical-resistance protein ARR1.